Reading from the N-terminus, the 504-residue chain is Maturase K (504 aa).

The protein belongs to the intron maturase 2 family. MatK subfamily.

Its subcellular location is the plastid. The protein localises to the chloroplast. Its function is as follows. Usually encoded in the trnK tRNA gene intron. Probably assists in splicing its own and other chloroplast group II introns. This chain is Maturase K, found in Capsella bursa-pastoris (Shepherd's purse).